The following is a 281-amino-acid chain: N-acetylmuramic acid 6-phosphate etherase (281 aa).

Residues 63–226 (IVPRMKQGGR…TTSVMIQLGR (164 aa)) form the SIS domain. Glu-91 serves as the catalytic Proton donor. The active site involves Glu-122.

The protein belongs to the GCKR-like family. MurNAc-6-P etherase subfamily. Homodimer.

The catalysed reaction is N-acetyl-D-muramate 6-phosphate + H2O = N-acetyl-D-glucosamine 6-phosphate + (R)-lactate. The protein operates within amino-sugar metabolism; N-acetylmuramate degradation. Its function is as follows. Specifically catalyzes the cleavage of the D-lactyl ether substituent of MurNAc 6-phosphate, producing GlcNAc 6-phosphate and D-lactate. This Bacteroides fragilis (strain YCH46) protein is N-acetylmuramic acid 6-phosphate etherase.